A 212-amino-acid chain; its full sequence is Interleukin-6 (212 aa).

An N-terminal signal peptide occupies residues 1 to 27 (MNSVSTSAFGPVAFSLGLLLVLPAAFP). The cysteines at positions 72 and 78 are disulfide-linked. Asparagine 73 carries an N-linked (GlcNAc...) asparagine glycan. Serine 81 is modified (phosphoserine). Cysteine 101 and cysteine 111 form a disulfide bridge. The N-linked (GlcNAc...) asparagine glycan is linked to asparagine 172.

It belongs to the IL-6 superfamily. Component of a hexamer of two molecules each of IL6, IL6R and IL6ST; first binds to IL6R to associate with the signaling subunit IL6ST. Interacts with IL6R (via the N-terminal ectodomain); this interaction may be affected by IL6R-binding with SORL1, hence decreasing IL6 cis signaling. Interacts with SORL1 (via the N-terminal ectodomain); this interaction leads to IL6 internalization and lysosomal degradation. May form a trimeric complex with the soluble SORL1 ectodomain and soluble IL6R receptor; this interaction might stabilize circulating IL6, hence promoting IL6 trans signaling.

The protein localises to the secreted. Its function is as follows. Cytokine with a wide variety of biological functions in immunity, tissue regeneration, and metabolism. Binds to IL6R, then the complex associates to the signaling subunit IL6ST/gp130 to trigger the intracellular IL6-signaling pathway. The interaction with the membrane-bound IL6R and IL6ST stimulates 'classic signaling', whereas the binding of IL6 and soluble IL6R to IL6ST stimulates 'trans-signaling'. Alternatively, 'cluster signaling' occurs when membrane-bound IL6:IL6R complexes on transmitter cells activate IL6ST receptors on neighboring receiver cells. In terms of biological role, IL6 is a potent inducer of the acute phase response. Rapid production of IL6 contributes to host defense during infection and tissue injury, but excessive IL6 synthesis is involved in disease pathology. In the innate immune response, is synthesized by myeloid cells, such as macrophages and dendritic cells, upon recognition of pathogens through toll-like receptors (TLRs) at the site of infection or tissue injury. In the adaptive immune response, is required for the differentiation of B cells into immunoglobulin-secreting cells. Plays a major role in the differentiation of CD4(+) T cell subsets. Essential factor for the development of T follicular helper (Tfh) cells that are required for the induction of germinal-center formation. Required to drive naive CD4(+) T cells to the Th17 lineage. Also required for proliferation of myeloma cells and the survival of plasmablast cells. Acts as an essential factor in bone homeostasis and on vessels directly or indirectly by induction of VEGF, resulting in increased angiogenesis activity and vascular permeability. Induces, through 'trans-signaling' and synergistically with IL1B and TNF, the production of VEGF. Involved in metabolic controls, is discharged into the bloodstream after muscle contraction increasing lipolysis and improving insulin resistance. 'Trans-signaling' in central nervous system also regulates energy and glucose homeostasis. Mediates, through GLP-1, crosstalk between insulin-sensitive tissues, intestinal L cells and pancreatic islets to adapt to changes in insulin demand. Also acts as a myokine. Plays a protective role during liver injury, being required for maintenance of tissue regeneration. Also has a pivotal role in iron metabolism by regulating HAMP/hepcidin expression upon inflammation or bacterial infection. Through activation of IL6ST-YAP-NOTCH pathway, induces inflammation-induced epithelial regeneration. The sequence is that of Interleukin-6 (IL6) from Macaca thibetana (Pere David's macaque).